Reading from the N-terminus, the 181-residue chain is ADP-ribosylation factor 1 (181 aa).

The N-myristoyl glycine moiety is linked to residue glycine 2. Residues 24–31 (GLDAAGKT), 126–129 (NKQD), and alanine 160 contribute to the GTP site.

This sequence belongs to the small GTPase superfamily. Arf family. In terms of assembly, may interact with GTPase RAB5b.

Its subcellular location is the golgi apparatus membrane. The catalysed reaction is GTP + H2O = GDP + phosphate + H(+). Its activity is regulated as follows. Alternates between an inactive GDP-bound form and an active GTP-bound form. Intrinsic GTPase activity is almost undetectable in vitro. Activated by a guanine nucleotide-exchange factor (GEF) and inactivated by GTPase-activating protein ARFGAP1. Small GTPase involved in protein trafficking between different compartments. Modulates vesicle budding and uncoating within the Golgi complex. In its GTP-bound form, triggers the recruitment of coatomer proteins to the Golgi membrane. The hydrolysis of ARF1-bound GTP, which is mediated by ARFGAPs proteins, is required for dissociation of coat proteins from Golgi membranes and vesicles. Regulates the transport of N-acylated AK2 to the parasitophorous vacuole membrane. May be involved in the activation of lipid kinase PIP5K. This Plasmodium falciparum (isolate NF54) protein is ADP-ribosylation factor 1 (ARF1).